A 450-amino-acid polypeptide reads, in one-letter code: MSMEFDAVIIGGGVSGCATFYTLSEYSSLKRVAIVEKCSKLAQISSSAKANSQTIHDGSIETNYTPEKAKKVRLSAYKTRQYALNKGLQNEVIFETQKMAIGVGDEECEFMKKRYESFKEIFVGLEEFDKQKIKELEPNVILGANGIDRHENIVGHGYQKDWSTMNFAKLSENFVEEALKLRPNNQVFLNFKVKKIEKRNDTYAVISEDAEEVYAKFVLVNAGSYALPLAQSMGYGLDLGCLPVAGSFYFVPDLLKGKVYTVQNPKLPFAAVHGDPDAVIKGKTRIGPTALTMPKLERNKCWLKGISLELLKMDLNKDVFKIAFDLMSDKEIRNYVFKNMVFELPIIGKRKFLKDAQKIIPSLSLEDLEYAHGFGEVRPQVLDRTKRKLELGEKKICTHKGITFNMTPSPGATSCLQNALVDSQEIAAYLGESFELERFYKDLSPEELEN.

It belongs to the MQO family. The cofactor is FAD.

The enzyme catalyses (S)-malate + a quinone = a quinol + oxaloacetate. The protein operates within carbohydrate metabolism; tricarboxylic acid cycle; oxaloacetate from (S)-malate (quinone route): step 1/1. In Helicobacter pylori (strain P12), this protein is Probable malate:quinone oxidoreductase.